The sequence spans 163 residues: Nucleotide-binding protein Mvan_0997 (163 aa).

It belongs to the YajQ family.

Nucleotide-binding protein. In Mycolicibacterium vanbaalenii (strain DSM 7251 / JCM 13017 / BCRC 16820 / KCTC 9966 / NRRL B-24157 / PYR-1) (Mycobacterium vanbaalenii), this protein is Nucleotide-binding protein Mvan_0997.